The sequence spans 285 residues: Small ribosomal subunit protein uS2 (285 aa).

The tract at residues 229–285 (AGLASGDAKPEAGAGEPLAEWEQELLAQANPNAEGSAEAAPAAATEEAPAAQTPADF) is disordered. Positions 257-285 (ANPNAEGSAEAAPAAATEEAPAAQTPADF) are enriched in low complexity.

Belongs to the universal ribosomal protein uS2 family.

The chain is Small ribosomal subunit protein uS2 from Nocardia farcinica (strain IFM 10152).